The sequence spans 201 residues: Recombination protein RecR (201 aa).

A C4-type zinc finger spans residues 60 to 75 (CSCCGNVDTIDPCTVC). The Toprim domain maps to 83-178 (AVIIVVEDVA…RITRLAHGVP (96 aa)).

It belongs to the RecR family.

In terms of biological role, may play a role in DNA repair. It seems to be involved in an RecBC-independent recombinational process of DNA repair. It may act with RecF and RecO. This Rhizobium meliloti (strain 1021) (Ensifer meliloti) protein is Recombination protein RecR.